We begin with the raw amino-acid sequence, 149 residues long: Large ribosomal subunit protein uL15 (149 aa).

Residues 14–57 (KQRKRVGRGSGSGWGCTSGKGNKGQNARSGGGVRPGFEGGQMPL) form a disordered region. Composition is skewed to gly residues over residues 21–35 (RGSG…GKGN) and 42–52 (SGGGVRPGFEG).

It belongs to the universal ribosomal protein uL15 family. As to quaternary structure, part of the 50S ribosomal subunit.

Its function is as follows. Binds to the 23S rRNA. The protein is Large ribosomal subunit protein uL15 of Oleidesulfovibrio alaskensis (strain ATCC BAA-1058 / DSM 17464 / G20) (Desulfovibrio alaskensis).